We begin with the raw amino-acid sequence, 535 residues long: Nuclear/nucleolar GTPase 2 (535 aa).

A disordered region spans residues 1-42 (MAKKKERAVNVSGKPRHSLDVNRANDKKGAGGGAGGGGGGRS). The segment covering 17–29 (HSLDVNRANDKKG) has biased composition (basic and acidic residues). The span at 30-41 (AGGGAGGGGGGR) shows a compositional bias: gly residues. The region spanning 213-374 (WGELYKVIDS…LIDCPGVVYQ (162 aa)) is the CP-type G domain. The interval 261–264 (NKCD) is G4. Residues 290–292 (SIN) form a G5 region. Residues 323-330 (GYPNVGKS) form a G1 region. Positions 349–353 (GETKV) are G2. Residues 367–370 (DCPG) form a G3 region. The interval 464-495 (FFVPPPQQGEDSPSETAEPVDKSDEEGVSSDR) is disordered.

The protein belongs to the TRAFAC class YlqF/YawG GTPase family. RsgA subfamily.

It localises to the nucleus. The protein localises to the nucleolus. Its function is as follows. GTPase involved in pre-60S ribosomal subunit maturation. The sequence is that of Nuclear/nucleolar GTPase 2 from Oryza sativa subsp. indica (Rice).